A 316-amino-acid chain; its full sequence is N-acetylmuramic acid 6-phosphate etherase (316 aa).

In terms of domain architecture, SIS spans 66–229 (IVAAIGRGGR…STASMIRLGK (164 aa)). Glutamate 94 serves as the catalytic Proton donor. Residue glutamate 125 is part of the active site.

This sequence belongs to the GCKR-like family. MurNAc-6-P etherase subfamily. In terms of assembly, homodimer.

It catalyses the reaction N-acetyl-D-muramate 6-phosphate + H2O = N-acetyl-D-glucosamine 6-phosphate + (R)-lactate. It functions in the pathway amino-sugar metabolism; 1,6-anhydro-N-acetylmuramate degradation. Its pathway is amino-sugar metabolism; N-acetylmuramate degradation. It participates in cell wall biogenesis; peptidoglycan recycling. Specifically catalyzes the cleavage of the D-lactyl ether substituent of MurNAc 6-phosphate, producing GlcNAc 6-phosphate and D-lactate. Together with AnmK, is also required for the utilization of anhydro-N-acetylmuramic acid (anhMurNAc) either imported from the medium or derived from its own cell wall murein, and thus plays a role in cell wall recycling. The chain is N-acetylmuramic acid 6-phosphate etherase from Jannaschia sp. (strain CCS1).